The chain runs to 379 residues: uncharacterized protein (379 aa).

Belongs to the glycosyltransferase 28 family.

This is an uncharacterized protein from Methanosarcina acetivorans (strain ATCC 35395 / DSM 2834 / JCM 12185 / C2A).